The chain runs to 241 residues: Protocatechuate 3,4-dioxygenase beta chain (241 aa).

Fe cation is bound by residues tyrosine 109, tyrosine 148, histidine 161, and histidine 163.

This sequence belongs to the intradiol ring-cleavage dioxygenase family. The enzyme is an oligomer of 12 copies of the alpha and beta chains. Fe(3+) serves as cofactor.

It catalyses the reaction 3,4-dihydroxybenzoate + O2 = 3-carboxy-cis,cis-muconate + 2 H(+). It participates in aromatic compound metabolism; beta-ketoadipate pathway; 3-carboxy-cis,cis-muconate from 3,4-dihydroxybenzoate: step 1/1. Functionally, plays an essential role in the utilization of numerous aromatic and hydroaromatic compounds via the beta-ketoadipate pathway. The polypeptide is Protocatechuate 3,4-dioxygenase beta chain (pcaH) (Acinetobacter baylyi (strain ATCC 33305 / BD413 / ADP1)).